Reading from the N-terminus, the 962-residue chain is Glycine dehydrogenase (decarboxylating) (962 aa).

N6-(pyridoxal phosphate)lysine is present on Lys-709.

The protein belongs to the GcvP family. As to quaternary structure, the glycine cleavage system is composed of four proteins: P, T, L and H. The cofactor is pyridoxal 5'-phosphate.

The enzyme catalyses N(6)-[(R)-lipoyl]-L-lysyl-[glycine-cleavage complex H protein] + glycine + H(+) = N(6)-[(R)-S(8)-aminomethyldihydrolipoyl]-L-lysyl-[glycine-cleavage complex H protein] + CO2. Functionally, the glycine cleavage system catalyzes the degradation of glycine. The P protein binds the alpha-amino group of glycine through its pyridoxal phosphate cofactor; CO(2) is released and the remaining methylamine moiety is then transferred to the lipoamide cofactor of the H protein. In Shewanella amazonensis (strain ATCC BAA-1098 / SB2B), this protein is Glycine dehydrogenase (decarboxylating).